A 212-amino-acid chain; its full sequence is Negative modulator of initiation of replication (212 aa).

Interaction with DNA regions lie at residues 113–114 and 144–148; these read AV and RTRVY.

The protein belongs to the SeqA family. In terms of assembly, homodimer. Polymerizes to form helical filaments.

It is found in the cytoplasm. Its function is as follows. Negative regulator of replication initiation, which contributes to regulation of DNA replication and ensures that replication initiation occurs exactly once per chromosome per cell cycle. Binds to pairs of hemimethylated GATC sequences in the oriC region, thus preventing assembly of replication proteins and re-initiation at newly replicated origins. Repression is relieved when the region becomes fully methylated. This is Negative modulator of initiation of replication from Actinobacillus succinogenes (strain ATCC 55618 / DSM 22257 / CCUG 43843 / 130Z).